Here is a 184-residue protein sequence, read N- to C-terminus: Adenine phosphoribosyltransferase (184 aa).

Belongs to the purine/pyrimidine phosphoribosyltransferase family. As to quaternary structure, homodimer.

The protein localises to the cytoplasm. It catalyses the reaction AMP + diphosphate = 5-phospho-alpha-D-ribose 1-diphosphate + adenine. It participates in purine metabolism; AMP biosynthesis via salvage pathway; AMP from adenine: step 1/1. Functionally, catalyzes a salvage reaction resulting in the formation of AMP, that is energically less costly than de novo synthesis. This Paracidovorax citrulli (strain AAC00-1) (Acidovorax citrulli) protein is Adenine phosphoribosyltransferase.